A 418-amino-acid chain; its full sequence is Serine hydroxymethyltransferase (418 aa).

(6S)-5,6,7,8-tetrahydrofolate-binding positions include leucine 121 and 125–127; that span reads GHL. Lysine 230 carries the post-translational modification N6-(pyridoxal phosphate)lysine. 356 to 358 contacts (6S)-5,6,7,8-tetrahydrofolate; that stretch reads SPF.

This sequence belongs to the SHMT family. As to quaternary structure, homodimer. It depends on pyridoxal 5'-phosphate as a cofactor.

The protein resides in the cytoplasm. The enzyme catalyses (6R)-5,10-methylene-5,6,7,8-tetrahydrofolate + glycine + H2O = (6S)-5,6,7,8-tetrahydrofolate + L-serine. It participates in one-carbon metabolism; tetrahydrofolate interconversion. Its pathway is amino-acid biosynthesis; glycine biosynthesis; glycine from L-serine: step 1/1. Catalyzes the reversible interconversion of serine and glycine with tetrahydrofolate (THF) serving as the one-carbon carrier. This reaction serves as the major source of one-carbon groups required for the biosynthesis of purines, thymidylate, methionine, and other important biomolecules. Also exhibits THF-independent aldolase activity toward beta-hydroxyamino acids, producing glycine and aldehydes, via a retro-aldol mechanism. The protein is Serine hydroxymethyltransferase of Shewanella woodyi (strain ATCC 51908 / MS32).